Reading from the N-terminus, the 124-residue chain is MPTINQLVRKGRTPKVSKTKAPALKGSPMRRGVCTRVYTTTPKKPNSALRKVARVRLNGGVEVTAYIPGVGHNLQEHSIVLVRGGRVKDLPGVRYKIVRGALDTQGVKNRKQARSRYGAKMEKK.

The tract at residues 1 to 28 is disordered; sequence MPTINQLVRKGRTPKVSKTKAPALKGSP. The span at 9-18 shows a compositional bias: basic residues; that stretch reads RKGRTPKVSK. The residue at position 89 (D89) is a 3-methylthioaspartic acid.

The protein belongs to the universal ribosomal protein uS12 family. Part of the 30S ribosomal subunit. Contacts proteins S8 and S17. May interact with IF1 in the 30S initiation complex.

Its function is as follows. With S4 and S5 plays an important role in translational accuracy. Interacts with and stabilizes bases of the 16S rRNA that are involved in tRNA selection in the A site and with the mRNA backbone. Located at the interface of the 30S and 50S subunits, it traverses the body of the 30S subunit contacting proteins on the other side and probably holding the rRNA structure together. The combined cluster of proteins S8, S12 and S17 appears to hold together the shoulder and platform of the 30S subunit. This Paenarthrobacter aurescens (strain TC1) protein is Small ribosomal subunit protein uS12.